Reading from the N-terminus, the 338-residue chain is MARKGSSIRLSSSRISTLLLFMFATFASFYVAGRLWQESQTRVHLINELDRVTGQGKSAISVDDTLKIIACREQKKTLAALEMELSSARQEGFVSKSPKLADGTETKKRPLVVIGIMTSLGNKKKRDAVRQAWMGTGASLKKLESEKGVIARFVIGRSANKGDSMDKSIDTENSQTDDFIILDDVVEAPEEASKKVKLFFAYAADRWDAQFYAKAIDNIYVNIDALGTTLAAHLENPRAYIGCMKSGEVFSEPNHKWYEPEWWKFGDKKAYFRHAYGEMYVITHALARFVSINRDILHSYAHDDVSTGSWFVGLDVKHVDEGKFCCSAWSSEAICAGV.

Topologically, residues 1 to 12 (MARKGSSIRLSS) are cytoplasmic. Residues 13–32 (SRISTLLLFMFATFASFYVA) traverse the membrane as a helical; Signal-anchor for type II membrane protein segment. At 33–338 (GRLWQESQTR…WSSEAICAGV (306 aa)) the chain is on the lumenal side.

The protein belongs to the glycosyltransferase 31 family. It depends on Mn(2+) as a cofactor. In terms of tissue distribution, expressed in roots, rosette leaves, cauline leaves, stems, flowers and siliques.

It localises to the golgi apparatus membrane. Its pathway is protein modification; protein glycosylation. Possesses hydroxyproline O-galactosyltransferase activity. Transfers galactose from UDP-galactose to hydroxyproline residues in the arabinogalactan proteins (AGPs). Is specific for AGPs containing non-contiguous peptidyl hydroxyproline residues. The addition of galactose onto the peptidyl hydroxyproline residues in AGP core proteins represents the first committed step in arabinogalactan polysaccharide addition. AGP glycans play essential roles in both vegetative and reproductive plant growth. This is Hydroxyproline O-galactosyltransferase HPGT1 from Arabidopsis thaliana (Mouse-ear cress).